A 249-amino-acid chain; its full sequence is Small ribosomal subunit protein eS6 (249 aa).

A compositionally biased stretch (basic and acidic residues) spans 216-229 (RMKEAKEKRQEQIA). The disordered stretch occupies residues 216–249 (RMKEAKEKRQEQIAKRRRLSSLRASTSKSESSQK). Phosphoserine occurs at positions 235, 236, 240, 244, and 247. Positions 236-249 (SLRASTSKSESSQK) are enriched in low complexity.

Belongs to the eukaryotic ribosomal protein eS6 family. As to quaternary structure, component of the small ribosomal subunit. In terms of processing, ribosomal protein S6 is the major substrate of protein kinases in eukaryote ribosomes. The phosphorylation is stimulated by growth factors, tumor promoting agents, and mitogens. It is dephosphorylated at growth arrest.

The protein resides in the cytoplasm. In terms of biological role, component of the 40S small ribosomal subunit. Plays an important role in controlling cell growth and proliferation through the selective translation of particular classes of mRNA. The chain is Small ribosomal subunit protein eS6 (rps6) from Oncorhynchus mykiss (Rainbow trout).